The primary structure comprises 288 residues: Hemin import ATP-binding protein HmuV (288 aa).

Residues 31–269 (LRARGLVVER…DLLTRVYQHP (239 aa)) form the ABC transporter domain. An ATP-binding site is contributed by 68–75 (GPNGAGKS).

The protein belongs to the ABC transporter superfamily. Heme (hemin) importer (TC 3.A.1.14.5) family. As to quaternary structure, the complex is composed of two ATP-binding proteins (HmuV), two transmembrane proteins (HmuU) and a solute-binding protein (HmuT).

It localises to the cell membrane. Its function is as follows. Part of the ABC transporter complex HmuTUV involved in hemin import. Responsible for energy coupling to the transport system. This Nocardia farcinica (strain IFM 10152) protein is Hemin import ATP-binding protein HmuV.